Consider the following 270-residue polypeptide: Mevalonyl-coenzyme A hydratase sidH (270 aa).

A PTS1-type peroxisomal targeting signal motif is present at residues 268-270 (SKL).

This sequence belongs to the enoyl-CoA hydratase/isomerase family.

It localises to the peroxisome. Its pathway is siderophore biosynthesis. Functionally, mevalonyl-coenzyme A hydratase; part of the siderophore biosynthetic pathway. Aspergillus fumigatus produces 4 types of siderophores, low-molecular-mass iron chelators, including excreted fusarinine C (FsC) and triacetylfusarinine C (TAFC) for iron uptake and intacellular ferricrocin (FC) for hyphal and hydroxyferricrocin (HFC) for conidial iron distribution and storage. TAFC consists of 3 N(2)-acetyl-N(5)-anhydromevalonyl-N(5)-hydroxyornithine residues cyclically linked by ester bonds; FC is a cyclic hexapeptide with the structure Gly-Ser-Gly-(N(5)-acetyl-N(5)-hydroxyornithine)x3. The biosynthesis of all four siderophores depends on the hydroxylation of ornithine, catalyzed by the monooxygenase sidA. Subsequently, the pathways for biosynthesis of extra- and intracellular siderophores split. For biosynthesis of extracellular siderophores, the transacylase sidF transfers anhydromevalonyl to N(5)-hydroxyornithine. The required anhydromevalonyl-CoA moiety is derived from mevalonate by CoA ligation and dehydration catalyzed by sidI and sidH respectively. The acetylation of N(5)-hydroxyornithine for FC biosynthesis involves the constitutively expressed sidL. FC is hydroxylated to HFC by an as yet uncharacterized enzyme during conidiation. Assembly of fusarinine C (FsC) and FC is catalyzed by two different nonribosomal peptide synthetases (NRPS), sidD and sidC respectively. Subsequently, sidG catalyzes N2-acetylation of FsC for forming TAFC. Both extra- and intracellular siderophores are crucial for growth during iron limitation and virulence. This chain is Mevalonyl-coenzyme A hydratase sidH, found in Aspergillus fumigatus (strain ATCC MYA-4609 / CBS 101355 / FGSC A1100 / Af293) (Neosartorya fumigata).